The chain runs to 162 residues: Selenoprotein F (162 aa).

The first 28 residues, 1 to 28 (MAAGQGGWLRPALGLRLLLATAFQAVSA), serve as a signal peptide directing secretion. A non-standard amino acid (selenocysteine) is located at residue Sec-93.

It belongs to the selenoprotein M/F family. As to quaternary structure, forms a tight complex with UGGT1/UGCGL1. Interacts with UGGT2/UGCGL2. Interacts with RDH11.

The protein localises to the endoplasmic reticulum lumen. May be involved in redox reactions associated with the formation of disulfide bonds. May contribute to the quality control of protein folding in the endoplasmic reticulum. May regulate protein folding by enhancing the catalytic activity of UGGT1/UGCGL1 and UGGT2/UGCGL2. This is Selenoprotein F from Mus musculus (Mouse).